The primary structure comprises 246 residues: MLLGVNIDHIATLRQARYATMLDSFNVEPSVLDAAYAAQRGGADSITLHVRGDRRHMQDADALSVRESVALPLNLEMGNTPEMVDFALRLKPDYICMVPEKREEITTEGGLDAVFHEKDLAPTMARMADNGIQVSLFIDPEVPQVEAAARLGAPMIELHTGCFANHSGRERTEELARLKRAAELAHSLGIQVNAGHGINYQNLEQLLAGVPYLHELNIGHTIVSRALFVGMEQAVREMRQAIDRLS.

Asn-6 contributes to the 3-amino-2-oxopropyl phosphate binding site. Residue 8–9 (DH) participates in 1-deoxy-D-xylulose 5-phosphate binding. Residue Arg-17 coordinates 3-amino-2-oxopropyl phosphate. The active-site Proton acceptor is His-49. Residues Arg-51 and His-56 each coordinate 1-deoxy-D-xylulose 5-phosphate. Glu-76 acts as the Proton acceptor in catalysis. Thr-106 provides a ligand contact to 1-deoxy-D-xylulose 5-phosphate. His-196 serves as the catalytic Proton donor. 3-amino-2-oxopropyl phosphate-binding positions include Gly-197 and 219 to 220 (GH).

This sequence belongs to the PNP synthase family. Homooctamer; tetramer of dimers.

The protein resides in the cytoplasm. It carries out the reaction 3-amino-2-oxopropyl phosphate + 1-deoxy-D-xylulose 5-phosphate = pyridoxine 5'-phosphate + phosphate + 2 H2O + H(+). Its pathway is cofactor biosynthesis; pyridoxine 5'-phosphate biosynthesis; pyridoxine 5'-phosphate from D-erythrose 4-phosphate: step 5/5. Catalyzes the complicated ring closure reaction between the two acyclic compounds 1-deoxy-D-xylulose-5-phosphate (DXP) and 3-amino-2-oxopropyl phosphate (1-amino-acetone-3-phosphate or AAP) to form pyridoxine 5'-phosphate (PNP) and inorganic phosphate. This chain is Pyridoxine 5'-phosphate synthase, found in Akkermansia muciniphila (strain ATCC BAA-835 / DSM 22959 / JCM 33894 / BCRC 81048 / CCUG 64013 / CIP 107961 / Muc).